The sequence spans 354 residues: Cellular communication network factor 6 (354 aa).

The N-terminal stretch at 1-23 (MQGLLFSTLLLAGLAQFCCRVQG) is a signal peptide. An IGFBP N-terminal domain is found at 44-117 (RKQFCHWPCK…RYETGVCAYL (74 aa)). Intrachain disulfides connect cysteine 48–cysteine 72, cysteine 52–cysteine 74, cysteine 54–cysteine 75, cysteine 61–cysteine 78, cysteine 86–cysteine 100, and cysteine 92–cysteine 114. N-linked (GlcNAc...) asparagine glycosylation is present at asparagine 178. In terms of domain architecture, TSP type-1 spans 208–253 (KCLVQATKWTPCSRTCGMGISNRVTNENSNCEMRKEKRLCYIQPCD). 5 cysteine pairs are disulfide-bonded: cysteine 268-cysteine 305, cysteine 285-cysteine 319, cysteine 296-cysteine 335, cysteine 299-cysteine 337, and cysteine 304-cysteine 341. The CTCK domain occupies 268–342 (CQPTFQLSKA…TSCVCQRNCR (75 aa)). Residue asparagine 308 is glycosylated (N-linked (GlcNAc...) asparagine).

Belongs to the CCN family. Predominant expression in adult kidney and testis and fetal kidney. Weaker expression found in placenta, ovary, prostate and small intestine. Also expressed in skeletally-derived cells such as synoviocytes and articular cartilage chondrocytes.

The protein localises to the secreted. Its subcellular location is the mitochondrion. Functionally, plays a role in mitochondrial electron transport and mitochondrial respiration. Through its regulation of the mitochondrial function may play a role in normal postnatal skeletal growth and cartilage homeostasis. The chain is Cellular communication network factor 6 from Homo sapiens (Human).